We begin with the raw amino-acid sequence, 505 residues long: Cobyric acid synthase (505 aa).

A GATase cobBQ-type domain is found at 260–453; it reads RIAVAAIYFP…FHGIIDEPEV (194 aa). Catalysis depends on C341, which acts as the Nucleophile. H445 is an active-site residue.

This sequence belongs to the CobB/CobQ family. CobQ subfamily.

It participates in cofactor biosynthesis; adenosylcobalamin biosynthesis. Its function is as follows. Catalyzes amidations at positions B, D, E, and G on adenosylcobyrinic A,C-diamide. NH(2) groups are provided by glutamine, and one molecule of ATP is hydrogenolyzed for each amidation. This chain is Cobyric acid synthase, found in Chlorobium phaeobacteroides (strain DSM 266 / SMG 266 / 2430).